Here is a 352-residue protein sequence, read N- to C-terminus: Holliday junction branch migration complex subunit RuvB (352 aa).

Positions 13-201 (FSLRKKELRL…FGISQKIEFY (189 aa)) are large ATPase domain (RuvB-L). ATP contacts are provided by residues Arg-41, Gly-82, Lys-85, Thr-86, Thr-87, 148 to 150 (EDF), Arg-191, Tyr-201, and Arg-238. Thr-86 contributes to the Mg(2+) binding site. The interval 202–273 (TYDELKQIIV…LIKKALNSYQ (72 aa)) is small ATPAse domain (RuvB-S). A head domain (RuvB-H) region spans residues 276–352 (EKGLDSLDRN…KYIDSKNENF (77 aa)). DNA-binding residues include Arg-330 and Arg-335.

It belongs to the RuvB family. Homohexamer. Forms an RuvA(8)-RuvB(12)-Holliday junction (HJ) complex. HJ DNA is sandwiched between 2 RuvA tetramers; dsDNA enters through RuvA and exits via RuvB. An RuvB hexamer assembles on each DNA strand where it exits the tetramer. Each RuvB hexamer is contacted by two RuvA subunits (via domain III) on 2 adjacent RuvB subunits; this complex drives branch migration. In the full resolvosome a probable DNA-RuvA(4)-RuvB(12)-RuvC(2) complex forms which resolves the HJ.

The protein localises to the cytoplasm. It carries out the reaction ATP + H2O = ADP + phosphate + H(+). The RuvA-RuvB-RuvC complex processes Holliday junction (HJ) DNA during genetic recombination and DNA repair, while the RuvA-RuvB complex plays an important role in the rescue of blocked DNA replication forks via replication fork reversal (RFR). RuvA specifically binds to HJ cruciform DNA, conferring on it an open structure. The RuvB hexamer acts as an ATP-dependent pump, pulling dsDNA into and through the RuvAB complex. RuvB forms 2 homohexamers on either side of HJ DNA bound by 1 or 2 RuvA tetramers; 4 subunits per hexamer contact DNA at a time. Coordinated motions by a converter formed by DNA-disengaged RuvB subunits stimulates ATP hydrolysis and nucleotide exchange. Immobilization of the converter enables RuvB to convert the ATP-contained energy into a lever motion, pulling 2 nucleotides of DNA out of the RuvA tetramer per ATP hydrolyzed, thus driving DNA branch migration. The RuvB motors rotate together with the DNA substrate, which together with the progressing nucleotide cycle form the mechanistic basis for DNA recombination by continuous HJ branch migration. Branch migration allows RuvC to scan DNA until it finds its consensus sequence, where it cleaves and resolves cruciform DNA. This chain is Holliday junction branch migration complex subunit RuvB, found in Prochlorococcus marinus (strain MIT 9215).